The following is a 518-amino-acid chain: Cytochrome P450 monooxygenase ARMGADRAFT_1018417 (518 aa).

Residues L3 to L23 traverse the membrane as a helical segment. C433 is a binding site for heme. A glycan (N-linked (GlcNAc...) asparagine) is linked at N455.

This sequence belongs to the cytochrome P450 family. Requires heme as cofactor.

The protein resides in the membrane. Its pathway is secondary metabolite biosynthesis. In terms of biological role, cytochrome P450 monooxygenase, part of the gene cluster that mediates the biosynthesis of melleolides, a range of antifungal and phytotoxic polyketide derivatives composed of an orsellinic acid (OA) moiety esterified to various sesquiterpene alcohols. The first step in melleolides biosynthesis is performed by the delta(6)-protoilludene synthase PRO1 which catalyzes the cyclization of farnesyl diphosphate to protoilludene. The orsellinic acid synthase armB produces OA by condensing acetyl-CoA with 3 malonyl-CoA units in a three-round chain elongation reaction folowed by a C2-C7 ring closure. ArmB further catalyzes the trans-esterification of OA to the various sesquiterpene alcohols resulting from the hydroxylation of protoilludene. The melleolides cluster also includes 5 cytochrome P450 monooxygenases, 4 NAD(+)-dependent oxidoreductases, one flavin-dependent oxidoreductase, and one O-methyltransferase. The cytochrome P450 monooxygenases may be involved in protoilludene hydroxylation to elaborate melleolides with multiple alcohol groups, such as melleolide D, which carries alcohol functionalities at C-4, C-5, C-10, and C-13. The role of the NAD(+)-dependent enzymes remains unknown. Numerous melleolides, including arnamial, show 5'-O-methylation of the aromatic moiety which may be catalyzed by the methyltransferase encoded in the cluster. The flavin-dependent oxidoreductase might represent the dehydrogenase yielding the aldehyde in position 1 of arnamial and other melleolides. Finally, several halogenase localized outside of the cluster, are able to catalyze the transfer of a single chlorine atom to the melleolide backbone, resulting in a 6'-chloromelleolide product. The sequence is that of Cytochrome P450 monooxygenase ARMGADRAFT_1018417 from Armillaria gallica (Bulbous honey fungus).